The primary structure comprises 218 residues: Glutathione S-transferase Mu 1 (218 aa).

Residues 2-88 form the GST N-terminal domain; that stretch reads PMILGYWDIR…YIARKHNLCG (87 aa). Position 7-8 (7-8) interacts with glutathione; that stretch reads YW. T34 is subject to Phosphothreonine. Residues 43–46, K50, 59–60, and 72–73 each bind glutathione; these read RSQW, NL, and QS. The region spanning 90 to 208 is the GST C-terminal domain; it reads TEEEKIRVDI…KSSRFLPRPV (119 aa). Substrate is bound at residue Y116. Phosphoserine is present on S210.

Belongs to the GST superfamily. Mu family. Homodimer. In terms of tissue distribution, liver (at protein level).

It localises to the cytoplasm. The catalysed reaction is RX + glutathione = an S-substituted glutathione + a halide anion + H(+). It carries out the reaction prostaglandin A2 + glutathione = prostaglandin A2-S-(R)-glutathione. The enzyme catalyses prostaglandin J2 + glutathione = prostaglandin J2-S-(R)-glutathione. It catalyses the reaction prostaglandin J2 + glutathione = prostaglandin J2-S-(S)-glutathione. The catalysed reaction is prostaglandin A2 + glutathione = prostaglandin A2-S-(S)-glutathione. It carries out the reaction 11(S)-hydroxy-14(S),15(S)-epoxy-(5Z,8Z,12E)-eicosatrienoate + glutathione = (11S,15S)-dihydroxy-14(R)-S-glutathionyl-(5Z,8Z,12E)-eicosatrienoate. In terms of biological role, conjugation of reduced glutathione to a wide number of exogenous and endogenous hydrophobic electrophiles. Involved in the formation of glutathione conjugates of both prostaglandin A2 (PGA2) and prostaglandin J2 (PGJ2). Participates in the formation of novel hepoxilin regioisomers. This Homo sapiens (Human) protein is Glutathione S-transferase Mu 1.